The following is a 1353-amino-acid chain: Adenylate cyclase type 9 (1353 aa).

Disordered stretches follow at residues 1-27 and 51-73; these read MASS…DSNS and SSSC…GGRL. The Cytoplasmic portion of the chain corresponds to 1 to 117; the sequence is MASSPHQQLL…CFPQTQRRFR (117 aa). Residues 16–27 show a composition bias toward polar residues; it reads EVSCDSSGDSNS. Residues 51–66 show a composition bias toward low complexity; the sequence is SSSCSSSGDSGGLPRR. The chain crosses the membrane as a helical span at residues 118 to 138; sequence YALFYVGFACLLWSIYFAVHM. Residues 139–141 lie on the Extracellular side of the membrane; sequence KSK. A helical transmembrane segment spans residues 142-162; sequence VIVMVVPALCFLVVCVGFFLF. Residues 163-171 are Cytoplasmic-facing; it reads TFTKLYARH. The helical transmembrane segment at 172 to 192 threads the bilayer; it reads YAWTSLALTLLVFALTLAAQF. The Extracellular segment spans residues 193 to 215; the sequence is QVWTPLSGRVDSSNHTLTATPAD. Asn206 is a glycosylation site (N-linked (GlcNAc...) asparagine). A helical transmembrane segment spans residues 216 to 235; it reads TCLSQVGSFSICIEVLLLLY. At 236–241 the chain is on the cytoplasmic side; sequence TVMQLP. A helical transmembrane segment spans residues 242 to 259; the sequence is LYLSLFLGVVYSVLFETF. At 260–280 the chain is on the extracellular side; sequence GYHFRNEDCYPSPGPGALHWE. Residues 281-301 traverse the membrane as a helical segment; sequence LLSRALLHVCIHAIGIHLFVM. The Cytoplasmic portion of the chain corresponds to 302–786; sequence SQVRSRSTFL…VKTFASATFS (485 aa). The interval 349–375 is disordered; it reads QGDEESENSVKRHATSSPKNRKKKSSI. Residues 359 to 374 show a composition bias toward basic residues; it reads KRHATSSPKNRKKKSS. Mg(2+) is bound by residues Asp399, Ile400, and Asp443. Residues 399-404, 441-443, and Arg487 contribute to the ATP site; these read DIVGFT and LGD. Disordered stretches follow at residues 596–615 and 641–685; these read DSRE…GSVS and SEAG…EEKL. Phosphoserine is present on residues Ser610 and Ser613. Polar residues predominate over residues 661–676; the sequence is STKASGGPNSKTQNGL. Phosphoserine occurs at positions 688, 691, and 706. Residues 787-807 form a helical membrane-spanning segment; that stretch reads SLLDVFLSTTVFLILSITCFL. Residues 808-818 are Extracellular-facing; the sequence is KYGATATPPPP. A helical membrane pass occupies residues 819–839; sequence AALAVFGADLLLEVLSLIVSI. The Cytoplasmic segment spans residues 840–867; that stretch reads RMVFFLEDVMTCTKWLLEWIAGWLPRHC. A helical membrane pass occupies residues 868–888; sequence IGAILVSLPALAVYSHITSEF. Over 889-891 the chain is Extracellular; sequence ETN. A helical membrane pass occupies residues 892–912; sequence IHVTMFTGSAVLVAVVHYCNF. Residues 913 to 920 are Cytoplasmic-facing; the sequence is CQLSSWMR. Residues 921–941 form a helical membrane-spanning segment; sequence SSLATIVGAGLLLLLHISLCQ. Over 942–975 the chain is Extracellular; that stretch reads DSSIVMSPLDSAQNFSAQRNPCNSSVLQDGRRPA. 2 N-linked (GlcNAc...) asparagine glycosylation sites follow: Asn955 and Asn964. The chain crosses the membrane as a helical span at residues 976 to 996; sequence SLIGKELILTFFLLLLLVWFL. Residues 997-1353 lie on the Cytoplasmic side of the membrane; that stretch reads NREFEVSYRL…LSKLNVSKSV (357 aa). Residues Lys1108, 1185–1187, 1192–1196, and Lys1232 each bind ATP; these read DIW and NIASR. Ser1257, Ser1259, Ser1295, Ser1307, and Ser1332 each carry phosphoserine. Residues 1290–1314 are disordered; sequence KASLGSDDSTQAKEARLSSKRSWRE. Residues 1299–1314 show a composition bias toward basic and acidic residues; that stretch reads TQAKEARLSSKRSWRE.

This sequence belongs to the adenylyl cyclase class-4/guanylyl cyclase family. It depends on Mg(2+) as a cofactor. Mn(2+) is required as a cofactor. Detected in brain, spleen, lung, liver and testis (at protein level). Detected in brain, especially in hippocampus, cerebellum and neocortex. Found in decreasing order in skeletal muscle, heart, adrenal gland, ovary and brain; and to a lesser extent, in kidney, liver, testis, lung, thymus and spleen.

It is found in the cell membrane. It catalyses the reaction ATP = 3',5'-cyclic AMP + diphosphate. Insensitive to calcium/calmodulin, forskolin and somatostatin. Stimulated by beta-adrenergic receptor activation. Activity is down-regulated by calcium/calcineurin. Adenylyl cyclase that catalyzes the formation of the signaling molecule cAMP in response to activation of G protein-coupled receptors. Contributes to signaling cascades activated by CRH (corticotropin-releasing factor), corticosteroids and by beta-adrenergic receptors. This Mus musculus (Mouse) protein is Adenylate cyclase type 9 (Adcy9).